A 944-amino-acid chain; its full sequence is MARGWVRPSRVPLCARAVWTAAALLLWTPWTAGEVEDSEAIDTLGQPDGPDSPLPTLKGYFLNFLEPVNNITIVQGQTAILHCKVAGNPPPNVRWLKNDAPVVQEPRRVIIRKTEYGSRLRIQDLDTTDTGYYQCVATNGLKTITATGVLYVRLGPTHSPNHNFQDDDQEDGFCQPYRGIACARFIGNRTIYVDSLQMQGEIENRITAAFTMIGTSTQLSDQCSQFAIPSFCHFVFPLCDARSRAPKPRELCRDECEVLENDLCRQEYTIARSNPLILMRLQLPKCEALPMPESPDAANCMRIGIPAERLGRYHQCYNGSGADYRGMASTTKSGHQCQPWALQHPHSHRLSSTEFPELGGGHAYCRNPGGQVEGPWCFTQNKNVRVELCDVPPCSPRDGSKMGILYILVPSIAIPLVIACLFFLVCMCRNKQKASASTPQRRQLMASPSQDMEMPLISQHKQAKLKEISLSTVRFMEELGEDRFGKVYKGHLFGPAPGEPTQAVAIKTLKDKAEGPLREEFRQEAMLRARLQHPNIVCLLGVVTKDQPLSMIFSYCSHGDLHEFLVMRSPHSDVGSTDDDRTVKSALEPPDFVHVVAQIAAGMEFLSSHHVVHKDLATRNVLVYDKLNVRISDLGLFREVYSADYYKLMGNSLLPIRWMSPEAVMYGKFSIDSDIWSYGVVLWEVFSYGLQPYCGYSNQDVVEMIRSRQVLPCPDDCPAWVYALMIECWNEFPSRRPRFKDIHSRLRSWGNLSNYNSSAQTSGASNTTQTSSLSTSPVSNVSNARYMAPKQKAQPFPQPQFIPMKGQIRPLVPPAQLYIPVNGYQPVPAYGAYLPNFYPVQIPMQMAPQQVPPQMVPKPSSHHSGSGSTSTGYVTTAPSNTSVADRAALLSEGTEDAQNIAEDVAQSPVQEAEEEEEGSVPETELLGDNDTLQVTEAAHVQLEA.

The first 33 residues, 1-33 (MARGWVRPSRVPLCARAVWTAAALLLWTPWTAG), serve as a signal peptide directing secretion. Topologically, residues 34–403 (EVEDSEAIDT…CSPRDGSKMG (370 aa)) are extracellular. Residues 55-145 (PTLKGYFLNF…VATNGLKTIT (91 aa)) form the Ig-like C2-type domain. An N-linked (GlcNAc...) asparagine glycan is attached at Asn-70. 9 disulfides stabilise this stretch: Cys-83/Cys-135, Cys-174/Cys-239, Cys-182/Cys-232, Cys-223/Cys-264, Cys-252/Cys-300, Cys-256/Cys-286, Cys-316/Cys-394, Cys-337/Cys-377, and Cys-365/Cys-389. The 135-residue stretch at 169-303 (QEDGFCQPYR…SPDAANCMRI (135 aa)) folds into the FZ domain. An N-linked (GlcNAc...) asparagine glycan is attached at Asn-188. Positions 316–394 (CYNGSGADYR…RVELCDVPPC (79 aa)) constitute a Kringle domain. The N-linked (GlcNAc...) asparagine glycan is linked to Asn-318. The helical transmembrane segment at 404–424 (ILYILVPSIAIPLVIACLFFL) threads the bilayer. The Cytoplasmic portion of the chain corresponds to 425 to 944 (VCMCRNKQKA…TEAAHVQLEA (520 aa)). One can recognise a Protein kinase domain in the interval 473-746 (VRFMEELGED…PRFKDIHSRL (274 aa)). Residues 479-487 (LGEDRFGKV) and Lys-507 each bind ATP. Residue Asp-615 is the Proton acceptor of the active site. The residue at position 646 (Tyr-646) is a Phosphotyrosine; by autocatalysis. The tract at residues 757–779 (SSAQTSGASNTTQTSSLSTSPVS) is disordered. Residues 765–779 (SNTTQTSSLSTSPVS) show a composition bias toward low complexity. At Arg-785 the chain carries Asymmetric dimethylarginine. 2 disordered regions span residues 850 to 879 (QVPP…TAPS) and 898 to 929 (QNIA…LGDN). Positions 857 to 872 (PKPSSHHSGSGSTSTG) are enriched in low complexity.

It belongs to the protein kinase superfamily. Tyr protein kinase family. ROR subfamily. As to quaternary structure, homodimer; promotes osteogenesis. Binds YWHAB. Interacts with WTIP. Interacts with ROR2. Mg(2+) is required as a cofactor.

It localises to the cell membrane. The catalysed reaction is L-tyrosyl-[protein] + ATP = O-phospho-L-tyrosyl-[protein] + ADP + H(+). Tyrosine-protein kinase receptor which may be involved in the early formation of the chondrocytes. It seems to be required for cartilage and growth plate development. Phosphorylates YWHAB, leading to induction of osteogenesis and bone formation. In contrast, has also been shown to have very little tyrosine kinase activity in vitro. May act as a receptor for wnt ligand WNT5A which may result in the inhibition of WNT3A-mediated signaling. The sequence is that of Tyrosine-protein kinase transmembrane receptor ROR2 (Ror2) from Mus musculus (Mouse).